The chain runs to 510 residues: NAD(P)H-quinone oxidoreductase subunit 2 A, chloroplastic (510 aa).

Helical transmembrane passes span 24-44, 57-77, 99-119, 124-144, 149-169, 183-203, 227-247, 295-315, 323-343, 354-374, 395-415, 418-438, and 484-504; these read LLLF…GLIL, IPWL…ALLF, IFQF…VEYI, MAIT…MFLC, LITI…LSGY, YLLM…WLYG, PGIS…LSPA, WHLL…LIAI, MLAY…IVGD, YMLF…LFGL, ALSL…AGFF, LYLF…IGLL, and MIVC…IIAI.

The protein belongs to the complex I subunit 2 family. As to quaternary structure, NDH is composed of at least 16 different subunits, 5 of which are encoded in the nucleus.

The protein localises to the plastid. Its subcellular location is the chloroplast thylakoid membrane. It catalyses the reaction a plastoquinone + NADH + (n+1) H(+)(in) = a plastoquinol + NAD(+) + n H(+)(out). The enzyme catalyses a plastoquinone + NADPH + (n+1) H(+)(in) = a plastoquinol + NADP(+) + n H(+)(out). NDH shuttles electrons from NAD(P)H:plastoquinone, via FMN and iron-sulfur (Fe-S) centers, to quinones in the photosynthetic chain and possibly in a chloroplast respiratory chain. The immediate electron acceptor for the enzyme in this species is believed to be plastoquinone. Couples the redox reaction to proton translocation, and thus conserves the redox energy in a proton gradient. The protein is NAD(P)H-quinone oxidoreductase subunit 2 A, chloroplastic of Solanum lycopersicum (Tomato).